A 215-amino-acid polypeptide reads, in one-letter code: Adenylate kinase (215 aa).

10–15 (GAGKGT) serves as a coordination point for ATP. Residues 30 to 59 (STGDMFRAAMKNETEMGKLAKSFIDKGELV) form an NMP region. AMP-binding positions include Thr-31, Arg-36, 57–59 (ELV), 86–89 (GYPR), and Gln-93. An LID region spans residues 127–165 (GRYICRNCGATYHKIFNPTKVEGVCDVCGSHDLYQRADD). Arg-128 provides a ligand contact to ATP. Cys-131 and Cys-134 together coordinate Zn(2+). 137–138 (TY) contacts ATP. Zn(2+) contacts are provided by Cys-151 and Cys-154. 2 residues coordinate AMP: Arg-162 and Arg-173. Position 201 (Gln-201) interacts with ATP.

It belongs to the adenylate kinase family. As to quaternary structure, monomer.

It localises to the cytoplasm. The catalysed reaction is AMP + ATP = 2 ADP. The protein operates within purine metabolism; AMP biosynthesis via salvage pathway; AMP from ADP: step 1/1. Functionally, catalyzes the reversible transfer of the terminal phosphate group between ATP and AMP. Plays an important role in cellular energy homeostasis and in adenine nucleotide metabolism. In Lactococcus lactis subsp. lactis (strain IL1403) (Streptococcus lactis), this protein is Adenylate kinase.